The sequence spans 466 residues: Asparagine--tRNA ligase (466 aa).

The protein belongs to the class-II aminoacyl-tRNA synthetase family. Homodimer.

The protein resides in the cytoplasm. It catalyses the reaction tRNA(Asn) + L-asparagine + ATP = L-asparaginyl-tRNA(Asn) + AMP + diphosphate + H(+). The protein is Asparagine--tRNA ligase of Salmonella paratyphi A (strain ATCC 9150 / SARB42).